Consider the following 358-residue polypeptide: MEFRGDANKRIAMISAHLQPSFTPQMEAKNSVMGRENCRAKGGNPGFKVAILGAAGGIGQSLSLLMKMNPLVSLLHLYDVVNAPGVTADVSHMDTGAVVRGFLGAKQLEDALTGMDLVIIPAGVPRKPGMTRDDLFKINAGIVKTLCEGVAKCCPNAIVNLISNPVNSTVAIAAEVFKKAGTYDPKKLLGVTTLDVARANTFVAEVLGLDPREVDVPVVGGHAGVTILPLLSQVKPPSSFTPSEIEYLTNRIQNGGTEVVEAKAGAGSATLSMAYAAAKFADACLRGLRGDANVIECSFVASQVTELAFFATKVRLGRTGAEEVFQLGPLNEYERVGLEKAKEELAGSIQKGVDFIRK.

Residues 1-38 constitute a glyoxysome transit peptide; it reads MEFRGDANKRIAMISAHLQPSFTPQMEAKNSVMGRENC. NAD(+) contacts are provided by residues 53–59 and Asp79; that span reads GAAGGIG. Positions 126 and 132 each coordinate substrate. NAD(+)-binding positions include Asn139 and 162-164; that span reads ISN. Asn164 and Arg198 together coordinate substrate. The active-site Proton acceptor is the His222. Position 273 (Met273) interacts with NAD(+).

Belongs to the LDH/MDH superfamily. MDH type 1 family. Homodimer.

The protein localises to the glyoxysome. The enzyme catalyses (S)-malate + NAD(+) = oxaloacetate + NADH + H(+). The chain is Malate dehydrogenase 2, glyoxysomal (MDH2) from Brassica napus (Rape).